A 344-amino-acid polypeptide reads, in one-letter code: DNA-directed RNA polymerase subunit alpha (344 aa).

Residues methionine 1–glutamate 232 are alpha N-terminal domain (alpha-NTD). The interval leucine 270–lysine 344 is alpha C-terminal domain (alpha-CTD).

Belongs to the RNA polymerase alpha chain family. As to quaternary structure, in plastids the minimal PEP RNA polymerase catalytic core is composed of four subunits: alpha, beta, beta', and beta''. When a (nuclear-encoded) sigma factor is associated with the core the holoenzyme is formed, which can initiate transcription.

The protein localises to the plastid. The protein resides in the chloroplast. It catalyses the reaction RNA(n) + a ribonucleoside 5'-triphosphate = RNA(n+1) + diphosphate. DNA-dependent RNA polymerase catalyzes the transcription of DNA into RNA using the four ribonucleoside triphosphates as substrates. The chain is DNA-directed RNA polymerase subunit alpha from Spirogyra maxima (Green alga).